A 481-amino-acid polypeptide reads, in one-letter code: Protein nucleotidyltransferase YdiU (481 aa).

Residues G85, G87, R88, K108, D120, G121, R172, and R179 each coordinate ATP. The active-site Proton acceptor is D248. Mg(2+) contacts are provided by N249 and D258. Residue D258 coordinates ATP.

The protein belongs to the SELO family. Mg(2+) is required as a cofactor. Mn(2+) serves as cofactor.

It carries out the reaction L-seryl-[protein] + ATP = 3-O-(5'-adenylyl)-L-seryl-[protein] + diphosphate. The enzyme catalyses L-threonyl-[protein] + ATP = 3-O-(5'-adenylyl)-L-threonyl-[protein] + diphosphate. The catalysed reaction is L-tyrosyl-[protein] + ATP = O-(5'-adenylyl)-L-tyrosyl-[protein] + diphosphate. It catalyses the reaction L-histidyl-[protein] + UTP = N(tele)-(5'-uridylyl)-L-histidyl-[protein] + diphosphate. It carries out the reaction L-seryl-[protein] + UTP = O-(5'-uridylyl)-L-seryl-[protein] + diphosphate. The enzyme catalyses L-tyrosyl-[protein] + UTP = O-(5'-uridylyl)-L-tyrosyl-[protein] + diphosphate. Functionally, nucleotidyltransferase involved in the post-translational modification of proteins. It can catalyze the addition of adenosine monophosphate (AMP) or uridine monophosphate (UMP) to a protein, resulting in modifications known as AMPylation and UMPylation. The chain is Protein nucleotidyltransferase YdiU from Cereibacter sphaeroides (strain ATCC 17029 / ATH 2.4.9) (Rhodobacter sphaeroides).